A 131-amino-acid polypeptide reads, in one-letter code: Small ribosomal subunit protein uS8 (131 aa).

This sequence belongs to the universal ribosomal protein uS8 family. Part of the 30S ribosomal subunit. Contacts proteins S5 and S12.

In terms of biological role, one of the primary rRNA binding proteins, it binds directly to 16S rRNA central domain where it helps coordinate assembly of the platform of the 30S subunit. In Wolinella succinogenes (strain ATCC 29543 / DSM 1740 / CCUG 13145 / JCM 31913 / LMG 7466 / NCTC 11488 / FDC 602W) (Vibrio succinogenes), this protein is Small ribosomal subunit protein uS8.